A 258-amino-acid polypeptide reads, in one-letter code: Imidazole glycerol phosphate synthase subunit HisF (258 aa).

Active-site residues include Asp-11 and Asp-130.

It belongs to the HisA/HisF family. As to quaternary structure, heterodimer of HisH and HisF.

The protein localises to the cytoplasm. It catalyses the reaction 5-[(5-phospho-1-deoxy-D-ribulos-1-ylimino)methylamino]-1-(5-phospho-beta-D-ribosyl)imidazole-4-carboxamide + L-glutamine = D-erythro-1-(imidazol-4-yl)glycerol 3-phosphate + 5-amino-1-(5-phospho-beta-D-ribosyl)imidazole-4-carboxamide + L-glutamate + H(+). It participates in amino-acid biosynthesis; L-histidine biosynthesis; L-histidine from 5-phospho-alpha-D-ribose 1-diphosphate: step 5/9. Functionally, IGPS catalyzes the conversion of PRFAR and glutamine to IGP, AICAR and glutamate. The HisF subunit catalyzes the cyclization activity that produces IGP and AICAR from PRFAR using the ammonia provided by the HisH subunit. The protein is Imidazole glycerol phosphate synthase subunit HisF of Klebsiella pneumoniae (strain 342).